Here is a 981-residue protein sequence, read N- to C-terminus: GPI ethanolamine phosphate transferase 1 (981 aa).

Residues 1–6 are Cytoplasmic-facing; sequence MAGSSR. The helical transmembrane segment at 7 to 27 threads the bilayer; it reads IGFMAIAVAFHLVYILSIFDI. Residues 28–464 are Lumenal-facing; the sequence is YFVSPIVTGM…LQTYDWLFLR (437 aa). N-linked (GlcNAc...) asparagine glycosylation is found at asparagine 148, asparagine 211, and asparagine 295. The helical transmembrane segment at 465 to 485 threads the bilayer; it reads ALITIGYLGWMAYATTTVLSL. Residues 486 to 496 lie on the Cytoplasmic side of the membrane; sequence YVVKESMSPQR. Residues 497–517 traverse the membrane as a helical segment; the sequence is TLLGSAFFLSLLVALYSSFII. At 518 to 519 the chain is on the lumenal side; the sequence is SK. The chain crosses the membrane as a helical span at residues 520–540; the sequence is SPPAYYLYAFFPVLFWEEVYA. At 541–560 the chain is on the cytoplasmic side; the sequence is RRANVAKGFQALFGHVKSGG. A helical membrane pass occupies residues 561–581; the sequence is AVVALVFNVVLYLGVIQSLAL. The Lumenal portion of the chain corresponds to 582–587; sequence AYIHRE. Residues 588–608 traverse the membrane as a helical segment; sequence ILTGLFVLGAFWPMTQGISFL. Residues 609–611 lie on the Cytoplasmic side of the membrane; it reads RSH. Residues 612–632 form a helical membrane-spanning segment; it reads LFLSMLWFFSCLAMSTFTLLP. At 633 to 638 the chain is on the lumenal side; the sequence is AMKVED. A helical membrane pass occupies residues 639–659; sequence IPLIMAGGGLMTFVGLAYLVL. Residues 660–681 are Cytoplasmic-facing; sequence EDFILSDVSSSKTKLKRLHTSR. A helical transmembrane segment spans residues 682 to 702; that stretch reads TLLGIQVGLIILAMLVTHSSA. Residues 703 to 708 are Lumenal-facing; that stretch reads TSLQAK. The helical transmembrane segment at 709-729 threads the bilayer; sequence LGLPKGNQIVGWFVLVTSLLM. At 730–744 the chain is on the cytoplasmic side; that stretch reads PLAYRLQPNSHYMHR. Residues 745-767 form a helical membrane-spanning segment; that stretch reads LAIIFLTCAPTFVILTISYEGLF. Over 768 to 819 the chain is Lumenal; it reads YVAFSITLLSWVRLEYAVDAFTQEKAKKQATVAGSQQHTPSTFRPLSLSDAR. A helical membrane pass occupies residues 820–840; sequence IALFFMVLLQSAFFSTGNIAS. The Cytoplasmic segment spans residues 841–862; sequence ISSFSLESVSRLIPVFDPFSQG. A helical transmembrane segment spans residues 863-883; the sequence is ALLILKIIIPFFLISANLGVL. Topologically, residues 884–892 are lumenal; that stretch reads NKRLGVAPS. Residues 893–913 form a helical membrane-spanning segment; it reads AIFMVVLTASDVLTLYFFWVV. The Cytoplasmic segment spans residues 914 to 929; the sequence is KDEGSWLEIGSTITHF. The chain crosses the membrane as a helical span at residues 930 to 950; the sequence is AIASFLCVFVAALEFVSAAFI. Residues 951 to 981 are Lumenal-facing; that stretch reads AGIEVEDTKSAALTSASTKADEKVPPVAGAE.

The protein belongs to the PIGG/PIGN/PIGO family. PIGN subfamily.

It localises to the endoplasmic reticulum membrane. It functions in the pathway glycolipid biosynthesis; glycosylphosphatidylinositol-anchor biosynthesis. In terms of biological role, ethanolamine phosphate transferase involved in glycosylphosphatidylinositol-anchor biosynthesis. Transfers ethanolamine phosphate to the first alpha-1,4-linked mannose of the glycosylphosphatidylinositol precursor of GPI-anchor. In Gibberella zeae (strain ATCC MYA-4620 / CBS 123657 / FGSC 9075 / NRRL 31084 / PH-1) (Wheat head blight fungus), this protein is GPI ethanolamine phosphate transferase 1 (MCD4).